Consider the following 377-residue polypeptide: 26S proteasome non-ATPase regulatory subunit 4 (377 aa).

Residues 5-188 enclose the VWFA domain; sequence STMVCVDNSE…LADALISSPI (184 aa). Lysine 122 is covalently cross-linked (Glycyl lysine isopeptide (Lys-Gly) (interchain with G-Cter in SUMO2)). Positions 197–262 are interaction with UBQLN1; the sequence is LGLGASDFEF…TEDSDDALLK (66 aa). Residues 211 to 230 enclose the UIM 1 domain; the sequence is SADPELALALRVSMEEQRQR. The interval 216–220 is essential for ubiquitin-binding; it reads LALAL. Over residues 224-237 the composition is skewed to basic and acidic residues; it reads MEEQRQRQEEEARR. Residues 224–255 are disordered; that stretch reads MEEQRQRQEEEARRAAAASAAEAGIATTGTED. A phosphothreonine mark is found at threonine 250 and threonine 253. Residues serine 256 and serine 266 each carry the phosphoserine modification. One can recognise a UIM 2 domain in the interval 282 to 301; it reads TEEEQIAYAMQMSLQGAEFG. An essential for ubiquitin-binding region spans residues 287–291; the sequence is IAYAM. Disordered regions lie at residues 300 to 327 and 341 to 377; these read FGQA…DDYD and NLPG…EDKK. Serine 358 and serine 361 each carry phosphoserine. The span at 365–377 shows a compositional bias: basic and acidic residues; sequence KDGKKDKKEEDKK.

Belongs to the proteasome subunit S5A family. Component of the 19S proteasome regulatory particle complex. The 26S proteasome consists of a 20S core particle (CP) and two 19S regulatory subunits (RP). The regulatory particle is made of a lid composed of 9 subunits, a base containing 6 ATPases and few additional components including PSMD4. Interacts with NUB1. Interacts with SQSTM1. Interacts with UBQLN4. Interacts with UBE3A. Interacts with UBQLN1 (via ubiquitin-like domain). Interacts with DDI2.

In terms of biological role, component of the 26S proteasome, a multiprotein complex involved in the ATP-dependent degradation of ubiquitinated proteins. This complex plays a key role in the maintenance of protein homeostasis by removing misfolded or damaged proteins, which could impair cellular functions, and by removing proteins whose functions are no longer required. Therefore, the proteasome participates in numerous cellular processes, including cell cycle progression, apoptosis, or DNA damage repair. PSMD4 acts as an ubiquitin receptor subunit through ubiquitin-interacting motifs and selects ubiquitin-conjugates for destruction. Displays a preferred selectivity for longer polyubiquitin chains. This Homo sapiens (Human) protein is 26S proteasome non-ATPase regulatory subunit 4 (PSMD4).